Here is a 217-residue protein sequence, read N- to C-terminus: MNKLIPLPREFFARDTNLVSTELIGKVLYFQGTTAIITETESYIGEDDPACHAARGRTKRTDVMFGPAGFSYVYLIYGMYYCLNFVTEDEGFPAATLIRGVYVISHNNVYTIDTAKIKSQITDEKTQSIIIRKNRRIMKFYIPNLKASNLYLNGPGKLCKYLGINTSYNKCDLINNKDFFVSDIGLNLPYYSTTRIGITKGTDKLWRYIVTDPKMLY.

One can recognise an RPE2 insert domain in the interval 105–145; the sequence is SHNNVYTIDTAKIKSQITDEKTQSIIIRKNRRIMKFYIPNL.

It belongs to the DNA glycosylase MPG family.

This is Putative 3-methyladenine DNA glycosylase from Rickettsia prowazekii (strain Madrid E).